An 890-amino-acid polypeptide reads, in one-letter code: DNA mismatch repair protein MutS (890 aa).

607-614 serves as a coordination point for ATP; it reads GPNMSGKS.

This sequence belongs to the DNA mismatch repair MutS family.

Its function is as follows. This protein is involved in the repair of mismatches in DNA. It is possible that it carries out the mismatch recognition step. This protein has a weak ATPase activity. In Bacillus thuringiensis (strain Al Hakam), this protein is DNA mismatch repair protein MutS.